Here is a 39-residue protein sequence, read N- to C-terminus: Contryphan-Cal2 (39 aa).

Residues 1-20 form the signal peptide; the sequence is MTRTAVLLLTLLFLVAMAAS. Cys-29 and Cys-35 form a disulfide bridge.

Expressed by the venom duct.

It is found in the secreted. Functionally, probable neurotoxin. This Californiconus californicus (California cone) protein is Contryphan-Cal2.